The following is a 386-amino-acid chain: DNA-directed RNA polymerase subunit Rpo1C (386 aa).

Belongs to the RNA polymerase beta' chain family. Part of the RNA polymerase complex.

It localises to the cytoplasm. The enzyme catalyses RNA(n) + a ribonucleoside 5'-triphosphate = RNA(n+1) + diphosphate. DNA-dependent RNA polymerase (RNAP) catalyzes the transcription of DNA into RNA using the four ribonucleoside triphosphates as substrates. Forms part of the jaw domain. This chain is DNA-directed RNA polymerase subunit Rpo1C, found in Methanococcus maripaludis (strain DSM 14266 / JCM 13030 / NBRC 101832 / S2 / LL).